Here is a 292-residue protein sequence, read N- to C-terminus: 4-hydroxy-tetrahydrodipicolinate synthase (292 aa).

Threonine 44 contacts pyruvate. The active-site Proton donor/acceptor is tyrosine 132. The Schiff-base intermediate with substrate role is filled by lysine 161. Residue isoleucine 203 participates in pyruvate binding.

It belongs to the DapA family. In terms of assembly, homotetramer.

The protein resides in the cytoplasm. The enzyme catalyses L-aspartate 4-semialdehyde + pyruvate = (2S,4S)-4-hydroxy-2,3,4,5-tetrahydrodipicolinate + H2O + H(+). Its pathway is amino-acid biosynthesis; L-lysine biosynthesis via DAP pathway; (S)-tetrahydrodipicolinate from L-aspartate: step 3/4. With respect to regulation, is feedback inhibited by lysine. Is competitively inhibited by 2-oxobutyrate with respect to pyruvate. Functionally, catalyzes the condensation of (S)-aspartate-beta-semialdehyde [(S)-ASA] and pyruvate to 4-hydroxy-tetrahydrodipicolinate (HTPA). This chain is 4-hydroxy-tetrahydrodipicolinate synthase, found in Rhizobium meliloti (Ensifer meliloti).